Reading from the N-terminus, the 315-residue chain is Glutamyl-Q tRNA(Asp) synthetase (315 aa).

L-glutamate is bound by residues 12–16 (RFAPS) and E48. Positions 15–25 (PSPSGPLHFGS) match the 'HIGH' region motif. C104, C106, Y124, and C128 together coordinate Zn(2+). L-glutamate contacts are provided by Y181 and R199. The 'KMSKS' region signature appears at 237–241 (KLSKQ). ATP is bound at residue K240.

It belongs to the class-I aminoacyl-tRNA synthetase family. GluQ subfamily. Requires Zn(2+) as cofactor.

Functionally, catalyzes the tRNA-independent activation of glutamate in presence of ATP and the subsequent transfer of glutamate onto a tRNA(Asp). Glutamate is transferred on the 2-amino-5-(4,5-dihydroxy-2-cyclopenten-1-yl) moiety of the queuosine in the wobble position of the QUC anticodon. The chain is Glutamyl-Q tRNA(Asp) synthetase from Aromatoleum aromaticum (strain DSM 19018 / LMG 30748 / EbN1) (Azoarcus sp. (strain EbN1)).